Here is a 276-residue protein sequence, read N- to C-terminus: S-adenosylmethionine-dependent nucleotide dehydratase (276 aa).

The region spanning 6–216 is the Radical SAM core domain; sequence TSVRKFRSAN…RRRHEDIGCI (211 aa). 3 residues coordinate [4Fe-4S] cluster: Cys-22, Cys-26, and Cys-29.

It belongs to the radical SAM superfamily. Viperin family. It depends on [4Fe-4S] cluster as a cofactor.

It carries out the reaction CTP + AH2 + S-adenosyl-L-methionine = 3'-deoxy-3',4'-didehydro-CTP + 5'-deoxyadenosine + L-methionine + A + H2O + H(+). Functionally, expression of pVip50 in E.coli (strain MG1655) confers resistance to phage P1; has no effect against T7. Catalyzes the conversion of cytosine triphosphate (CTP) to 3'-deoxy-3',4'-didehydro-CTP (ddhCTP), probably via a SAM-dependent radical mechanism. The modified nucleotide represses transcription from T7 RNA polymerase-directed genes (possibly by acting as chain terminators), strongly suggesting these nucleotides block viral polymerase transcription. How this protein allows bacteria to resist viruses that do not encode their own RNA polymerase (such as lambda, P1) is unknown. The protein is S-adenosylmethionine-dependent nucleotide dehydratase of Thermoplasmatales archaeon (strain ISO4-H5).